We begin with the raw amino-acid sequence, 919 residues long: Sarcosine dehydrogenase, mitochondrial (919 aa).

Residues 1–22 (MASLSRVLRVAATCPRGRAAWN) constitute a mitochondrion transit peptide. N6-succinyllysine is present on lysine 38. Residue histidine 109 is modified to Tele-8alpha-FAD histidine. Residue lysine 174 is modified to N6-acetyllysine; alternate. Residue lysine 174 is modified to N6-succinyllysine; alternate. An N6-succinyllysine mark is found at lysine 278, lysine 378, lysine 392, and lysine 535. Residues lysine 560 and lysine 776 each carry the N6-acetyllysine modification. The residue at position 778 (tyrosine 778) is a Phosphotyrosine. An N6-acetyllysine; alternate mark is found at lysine 803, lysine 885, and lysine 905. Residues lysine 803, lysine 885, and lysine 905 each carry the N6-succinyllysine; alternate modification.

It belongs to the GcvT family. It depends on FAD as a cofactor.

It localises to the mitochondrion matrix. It carries out the reaction (6S)-5,6,7,8-tetrahydrofolyl-(gamma-L-Glu)(n) + sarcosine + oxidized [electron-transfer flavoprotein] + H(+) = (6R)-5,10-methylenetetrahydrofolyl-(gamma-L-Glu)(n) + reduced [electron-transfer flavoprotein] + glycine. It participates in amine and polyamine degradation; sarcosine degradation; formaldehyde and glycine from sarcosine: step 1/1. In terms of biological role, catalyzes the last step of the oxidative degradation of choline to glycine. Converts sarcosine into glycine. The polypeptide is Sarcosine dehydrogenase, mitochondrial (Mus musculus (Mouse)).